A 171-amino-acid chain; its full sequence is 3-hydroxydecanoyl-[acyl-carrier-protein] dehydratase (171 aa).

The active site involves histidine 70.

The protein belongs to the thioester dehydratase family. FabA subfamily. Homodimer.

The protein localises to the cytoplasm. It catalyses the reaction a (3R)-hydroxyacyl-[ACP] = a (2E)-enoyl-[ACP] + H2O. The catalysed reaction is (3R)-hydroxydecanoyl-[ACP] = (2E)-decenoyl-[ACP] + H2O. The enzyme catalyses (2E)-decenoyl-[ACP] = (3Z)-decenoyl-[ACP]. Its pathway is lipid metabolism; fatty acid biosynthesis. Necessary for the introduction of cis unsaturation into fatty acids. Catalyzes the dehydration of (3R)-3-hydroxydecanoyl-ACP to E-(2)-decenoyl-ACP and then its isomerization to Z-(3)-decenoyl-ACP. Can catalyze the dehydratase reaction for beta-hydroxyacyl-ACPs with saturated chain lengths up to 16:0, being most active on intermediate chain length. This is 3-hydroxydecanoyl-[acyl-carrier-protein] dehydratase from Xanthomonas euvesicatoria pv. vesicatoria (strain 85-10) (Xanthomonas campestris pv. vesicatoria).